The following is a 297-amino-acid chain: UBX domain-containing protein 1 (297 aa).

An N-acetylalanine modification is found at A2. One can recognise a UBA domain in the interval 2–42 (AELTALESLIEMGFPKGRAEKALALTGNQGIEAAMDWLMEH). Positions 40–210 (MEHEDDPDVD…PSREPPTKRE (171 aa)) are disordered. The interaction with BRCA1 stretch occupies residues 43-297 (EDDPDVDEPL…VLIVAKKCPG (255 aa)). Composition is skewed to basic and acidic residues over residues 86–122 (LTEEERQEQTKRMLELVAQKQREREEREEREALERER) and 137–177 (RLQE…ERAK). A coiled-coil region spans residues 86–176 (LTEEERQEQT…KIERDKAERA (91 aa)). A compositionally biased stretch (pro residues) spans 187 to 199 (PSPPATEPGPVPS). S199 carries the phosphoserine modification. The residue at position 200 (S200) is a Phosphoserine; by MAPK12. A phosphothreonine mark is found at T207 and T229. The UBX domain occupies 209 to 291 (REYDQCRIQV…GLVPSAVLIV (83 aa)). A Phosphoserine modification is found at S270.

As to quaternary structure, component of a complex required to couple retrotranslocation, ubiquitination and deglycosylation composed of NGLY1, SAKS1, AMFR, VCP and RAD23B. Interacts with HOMER2. Interacts directly with VCP. Interacts with BRCA1 and BARD1; interaction takes place when BRCA1 is not autoubiquitinated bur is strongly enhanced in the presence of autoubiquitinated BRCA1.

The protein resides in the cytoplasm. Functionally, ubiquitin-binding protein that interacts with the BRCA1-BARD1 heterodimer, and regulates its activity. Specifically binds 'Lys-6'-linked polyubiquitin chains. Interaction with autoubiquitinated BRCA1, leads to inhibit the E3 ubiquitin-protein ligase activity of the BRCA1-BARD1 heterodimer. Component of a complex required to couple deglycosylation and proteasome-mediated degradation of misfolded proteins in the endoplasmic reticulum that are retrotranslocated in the cytosol. This chain is UBX domain-containing protein 1 (UBXN1), found in Bos taurus (Bovine).